We begin with the raw amino-acid sequence, 465 residues long: Asparagine--tRNA ligase (465 aa).

It belongs to the class-II aminoacyl-tRNA synthetase family. Homodimer.

Its subcellular location is the cytoplasm. The enzyme catalyses tRNA(Asn) + L-asparagine + ATP = L-asparaginyl-tRNA(Asn) + AMP + diphosphate + H(+). This Pseudoalteromonas translucida (strain TAC 125) protein is Asparagine--tRNA ligase.